Here is a 132-residue protein sequence, read N- to C-terminus: Small ribosomal subunit protein uS8 (132 aa).

Belongs to the universal ribosomal protein uS8 family. Part of the 30S ribosomal subunit. Contacts proteins S5 and S12.

Its function is as follows. One of the primary rRNA binding proteins, it binds directly to 16S rRNA central domain where it helps coordinate assembly of the platform of the 30S subunit. This chain is Small ribosomal subunit protein uS8, found in Baumannia cicadellinicola subsp. Homalodisca coagulata.